The sequence spans 373 residues: Glutamate 5-kinase (373 aa).

ATP is bound at residue Lys-12. Residues Ser-52, Asp-139, and Asn-154 each coordinate substrate. Residue 216–222 participates in ATP binding; it reads TGGMVTK. Residues 281–359 enclose the PUA domain; that stretch reads RGSICVDDGA…QELNAVLGGN (79 aa).

The protein belongs to the glutamate 5-kinase family.

The protein resides in the cytoplasm. The catalysed reaction is L-glutamate + ATP = L-glutamyl 5-phosphate + ADP. Its pathway is amino-acid biosynthesis; L-proline biosynthesis; L-glutamate 5-semialdehyde from L-glutamate: step 1/2. Catalyzes the transfer of a phosphate group to glutamate to form L-glutamate 5-phosphate. The protein is Glutamate 5-kinase of Dehalococcoides mccartyi (strain CBDB1).